The chain runs to 525 residues: GMP synthase [glutamine-hydrolyzing] (525 aa).

The 199-residue stretch at 9–207 (RILILDFGSQ…VLDICACEAL (199 aa)) folds into the Glutamine amidotransferase type-1 domain. The active-site Nucleophile is C86. Active-site residues include H181 and E183. Residues 208–400 (WTPATIIEDA…LGLPYDMLYR (193 aa)) form the GMPS ATP-PPase domain. 235–241 (SGGVDSS) lines the ATP pocket.

In terms of assembly, homodimer.

The catalysed reaction is XMP + L-glutamine + ATP + H2O = GMP + L-glutamate + AMP + diphosphate + 2 H(+). The protein operates within purine metabolism; GMP biosynthesis; GMP from XMP (L-Gln route): step 1/1. Catalyzes the synthesis of GMP from XMP. This chain is GMP synthase [glutamine-hydrolyzing], found in Yersinia enterocolitica serotype O:8 / biotype 1B (strain NCTC 13174 / 8081).